The following is a 1485-amino-acid chain: Chromosome partition protein MukB (1485 aa).

34–41 serves as a coordination point for ATP; sequence GGNGAGKS. Coiled-coil stretches lie at residues 337–480, 509–605, 780–805, 835–915, 977–1116, and 1210–1235; these read LNLV…QAYQ, QHLA…PVWL, RAAR…ATLS, EAEI…IQQH, GMLT…AKAG, and EAIE…KLAI. Residues 666–783 form a flexible hinge region; sequence PSGAEDARLI…EVPLFGRAAR (118 aa).

Belongs to the SMC family. MukB subfamily. In terms of assembly, homodimerization via its hinge domain. Binds to DNA via its C-terminal region. Interacts, and probably forms a ternary complex, with MukE and MukF via its C-terminal region. The complex formation is stimulated by calcium or magnesium. Interacts with tubulin-related protein FtsZ.

It localises to the cytoplasm. The protein resides in the nucleoid. Functionally, plays a central role in chromosome condensation, segregation and cell cycle progression. Functions as a homodimer, which is essential for chromosome partition. Involved in negative DNA supercoiling in vivo, and by this means organize and compact chromosomes. May achieve or facilitate chromosome segregation by condensation DNA from both sides of a centrally located replisome during cell division. This is Chromosome partition protein MukB from Yersinia pseudotuberculosis serotype O:1b (strain IP 31758).